Consider the following 107-residue polypeptide: EMBRYO SURROUNDING FACTOR 1-like protein 5 (107 aa).

An N-terminal signal peptide occupies residues 1 to 22 (MSLLRFAILCIIFVSLFGVHEC). Intrachain disulfides connect C35–C49, C40–C69, C47–C65, and C50–C58. Residues 87-107 (GLGPPIYLFFLGQFIYFVLGL) form a helical membrane-spanning segment.

Belongs to the MEG family. As to expression, expressed in flowers.

It localises to the membrane. This Arabidopsis thaliana (Mouse-ear cress) protein is EMBRYO SURROUNDING FACTOR 1-like protein 5 (ESFL5).